Consider the following 626-residue polypeptide: Nuclear RNA export factor 2 (626 aa).

Phosphoserine is present on Ser-34. The region spanning 124 to 203 (WFKVTIPYGI…IFVNHSTAPY (80 aa)) is the RRM domain. LRR repeat units lie at residues 271–296 (ELLS…EKAP), 297–320 (KVKT…VKGL), 321–348 (KLEE…AIRD), and 349–376 (CFPK…ETMK). The NTF2 domain maps to 391–541 (LVLQFLQQYY…LCIVNDELFV (151 aa)). Residues 570–625 (QEQQEMVQAFSAQSGMKLEWSQKCLQDNEWNYTRAGQAFTMLQTEGKIPAEAFKQI) enclose the TAP-C domain.

Belongs to the NXF family. As to quaternary structure, interacts with NXT1, NXT2, E1B-AP5, the REF proteins and with nucleoporins, Nup62, Nup153 and Nup214. Interacts with LUZP4. In terms of tissue distribution, expressed almost exclusively in testis. Also expressed in several cancers.

Its subcellular location is the nucleus. It localises to the nucleoplasm. It is found in the cytoplasm. Its function is as follows. Involved in the export of mRNA from the nucleus to the cytoplasm. This is Nuclear RNA export factor 2 (NXF2) from Homo sapiens (Human).